The following is a 220-amino-acid chain: UPF0319 protein Ent638_1476 (220 aa).

The N-terminal stretch at 1 to 20 (MKTGIVSAVLALVMPVCVYA) is a signal peptide.

Belongs to the UPF0319 family.

The polypeptide is UPF0319 protein Ent638_1476 (Enterobacter sp. (strain 638)).